The chain runs to 354 residues: MTELKNDRYLRALLRQPVDVTPVWMMRQAGRYLPEYKATRAQAGDFMSLCKNAELACEVTLQPLRRYPLDAAILFSDILTIPDAMGLGLYFEAGEGPRFTAPVTCKGDVDKLPIPDPEDELGYVMNAVRTIRRELKGEVPLIGFSGSPWTLATYMVEGGSSKAFTVIKKMMYADPQALHLLLDKLAKSVTLYLNAQIKAGAQSVMIFDTWGGVLTGRDYQQFSLYYMHKIVDGLLRENDGRRVPVTLFTKGGGQWLEAMAETGCDALGLDWTTDIADARRRVGHKVALQGNMDPSMLYAPPARIEDEVATILAGFGQGEGHVFNLGHGIHQDVPPEHAGAFVEAVHRLSAQYHN.

Residues Arg27 to Arg31, Asp77, Tyr154, Thr209, and His327 each bind substrate.

The protein belongs to the uroporphyrinogen decarboxylase family. Homodimer.

It is found in the cytoplasm. It carries out the reaction uroporphyrinogen III + 4 H(+) = coproporphyrinogen III + 4 CO2. It participates in porphyrin-containing compound metabolism; protoporphyrin-IX biosynthesis; coproporphyrinogen-III from 5-aminolevulinate: step 4/4. In terms of biological role, catalyzes the decarboxylation of four acetate groups of uroporphyrinogen-III to yield coproporphyrinogen-III. The sequence is that of Uroporphyrinogen decarboxylase from Salmonella heidelberg (strain SL476).